The chain runs to 255 residues: Cell division protein DivIB (255 aa).

Residues 1-30 (MKNSKVIKLQDRVPKLKNQKKRNKPPVNHR) are Cytoplasmic-facing. A helical membrane pass occupies residues 31–51 (LILYISILFLLVLFLIYFRSP). The Extracellular segment spans residues 52-255 (LSNIKKISVF…FKYLDDEKKK (204 aa)). In terms of domain architecture, POTRA spans 53-121 (SNIKKISVFG…NKIDIHIEEY (69 aa)).

It belongs to the FtsQ/DivIB family. DivIB subfamily.

The protein resides in the cell membrane. Functionally, cell division protein that may be involved in stabilizing or promoting the assembly of the division complex. This chain is Cell division protein DivIB, found in Bacillus cytotoxicus (strain DSM 22905 / CIP 110041 / 391-98 / NVH 391-98).